The following is a 476-amino-acid chain: Bifunctional protein HldE (476 aa).

Residues methionine 1–glycine 319 form a ribokinase region. Residue asparagine 195–glutamate 198 coordinates ATP. Aspartate 264 is an active-site residue. The segment at methionine 344 to aspartate 476 is cytidylyltransferase.

It in the N-terminal section; belongs to the carbohydrate kinase PfkB family. In the C-terminal section; belongs to the cytidylyltransferase family. As to quaternary structure, homodimer.

It catalyses the reaction D-glycero-beta-D-manno-heptose 7-phosphate + ATP = D-glycero-beta-D-manno-heptose 1,7-bisphosphate + ADP + H(+). It carries out the reaction D-glycero-beta-D-manno-heptose 1-phosphate + ATP + H(+) = ADP-D-glycero-beta-D-manno-heptose + diphosphate. The protein operates within nucleotide-sugar biosynthesis; ADP-L-glycero-beta-D-manno-heptose biosynthesis; ADP-L-glycero-beta-D-manno-heptose from D-glycero-beta-D-manno-heptose 7-phosphate: step 1/4. It participates in nucleotide-sugar biosynthesis; ADP-L-glycero-beta-D-manno-heptose biosynthesis; ADP-L-glycero-beta-D-manno-heptose from D-glycero-beta-D-manno-heptose 7-phosphate: step 3/4. Functionally, catalyzes the phosphorylation of D-glycero-D-manno-heptose 7-phosphate at the C-1 position to selectively form D-glycero-beta-D-manno-heptose-1,7-bisphosphate. In terms of biological role, catalyzes the ADP transfer from ATP to D-glycero-beta-D-manno-heptose 1-phosphate, yielding ADP-D-glycero-beta-D-manno-heptose. This Actinobacillus succinogenes (strain ATCC 55618 / DSM 22257 / CCUG 43843 / 130Z) protein is Bifunctional protein HldE.